Reading from the N-terminus, the 377-residue chain is MTTSLFTQIRRDLHQIPEPGFAEVKTQQYLLDYLKKLPQERIEIKTWRTGILVKLAGTKPKRLIAWRTDMDGLPIVEETSYPFRSLHEGYMHACGHDMHMAIALGLLTHFTEHSIADDLLFLFQPAEEGPGGAWPMMESEEFAEWRPDCIFALHIAPEYPVGQIATKPGILFANTSELYIDLVGKGGHAAFPHKANDMVVAGSHLVTQLQSIISRNIDPLDSAVVTIGKLESGTKQNIIAEKSRLEGTIRTFSMESMALVKSRIESLVKGVEIGFDCQATIDYGVGYCQVYNEEQLTTDFMQWVQEQCDDVTLITCKEAMTGEDFGYFLKEIPGFLFWLGVQTPYGLHHSKIEPNEDAIEVAIRLVSRYFTWLSQQE.

The active site involves aspartate 69. Catalysis depends on glutamate 128, which acts as the Proton acceptor.

It belongs to the peptidase M20A family. N-acetyldiaminopimelate deacetylase subfamily.

The catalysed reaction is N-acetyl-(2S,6S)-2,6-diaminopimelate + H2O = (2S,6S)-2,6-diaminopimelate + acetate. Its pathway is amino-acid biosynthesis; L-lysine biosynthesis via DAP pathway; LL-2,6-diaminopimelate from (S)-tetrahydrodipicolinate (acetylase route): step 3/3. In terms of biological role, catalyzes the conversion of N-acetyl-diaminopimelate to diaminopimelate and acetate. This chain is N-acetyldiaminopimelate deacetylase, found in Brevibacillus brevis (strain 47 / JCM 6285 / NBRC 100599).